A 215-amino-acid chain; its full sequence is KID-containing protein 1 (215 aa).

Disordered stretches follow at residues 1 to 132 (MAGG…NKKR) and 150 to 183 (NPKS…GDVL). The span at 64–81 (DSEEEDEESEEDNDEEEL) shows a compositional bias: acidic residues. Residues 129–137 (NKKRRLQIY) carry the Nuclear localization signal motif. A compositionally biased stretch (acidic residues) spans 162–175 (DNDDEEGDDGDLSD). The kinase-inducible domain (KID) stretch occupies residues 177 to 204 (ERGGDVLARRPSFKNRALKSMSCFALSD). S188 is subject to Phosphoserine; by PKA.

As to quaternary structure, interacts with HDA19; Ser-188 is critical for this interaction. Strongly expressed in stems, flowers, roots and immature siliques, but not detected in leaf blades of seedlings.

It is found in the nucleus. Its function is as follows. Transcription activator which may regulates gene expression through interaction with the histone deacetylase HDA19. In Brassica napus (Rape), this protein is KID-containing protein 1.